We begin with the raw amino-acid sequence, 371 residues long: Probable tRNA sulfurtransferase (371 aa).

The region spanning asparagine 54–valine 156 is the THUMP domain. ATP contacts are provided by residues leucine 174–phenylalanine 175, asparagine 199–phenylalanine 200, lysine 254, glycine 276, and glutamine 285.

Belongs to the ThiI family.

The protein localises to the cytoplasm. It carries out the reaction [ThiI sulfur-carrier protein]-S-sulfanyl-L-cysteine + a uridine in tRNA + 2 reduced [2Fe-2S]-[ferredoxin] + ATP + H(+) = [ThiI sulfur-carrier protein]-L-cysteine + a 4-thiouridine in tRNA + 2 oxidized [2Fe-2S]-[ferredoxin] + AMP + diphosphate. The enzyme catalyses [ThiS sulfur-carrier protein]-C-terminal Gly-Gly-AMP + S-sulfanyl-L-cysteinyl-[cysteine desulfurase] + AH2 = [ThiS sulfur-carrier protein]-C-terminal-Gly-aminoethanethioate + L-cysteinyl-[cysteine desulfurase] + A + AMP + 2 H(+). The protein operates within cofactor biosynthesis; thiamine diphosphate biosynthesis. Functionally, catalyzes the ATP-dependent transfer of a sulfur to tRNA to produce 4-thiouridine in position 8 of tRNAs, which functions as a near-UV photosensor. Also catalyzes the transfer of sulfur to the sulfur carrier protein ThiS, forming ThiS-thiocarboxylate. This is a step in the synthesis of thiazole, in the thiamine biosynthesis pathway. The sulfur is donated as persulfide by IscS. This chain is Probable tRNA sulfurtransferase, found in Saccharolobus solfataricus (strain ATCC 35092 / DSM 1617 / JCM 11322 / P2) (Sulfolobus solfataricus).